The following is a 239-amino-acid chain: Orotidine 5'-phosphate decarboxylase (239 aa).

Substrate-binding positions include D10, K32, 59 to 68 (DLKLHDIPNT), T122, R184, Q193, G213, and R214. The active-site Proton donor is the K61.

Belongs to the OMP decarboxylase family. Type 1 subfamily. Homodimer.

It catalyses the reaction orotidine 5'-phosphate + H(+) = UMP + CO2. Its pathway is pyrimidine metabolism; UMP biosynthesis via de novo pathway; UMP from orotate: step 2/2. Catalyzes the decarboxylation of orotidine 5'-monophosphate (OMP) to uridine 5'-monophosphate (UMP). The polypeptide is Orotidine 5'-phosphate decarboxylase (Geobacillus sp. (strain WCH70)).